We begin with the raw amino-acid sequence, 393 residues long: MSMTVTTSSNVSDAAMLSRLALQIKSWGKALGFAQIGICDTDLTAEEAKLQTWLDKGFHGEMAYMETHGMMRARPHELHSGTVRVISARMDYLPPEAGFATNLASPNMGYISRYAGGRDYHKLIRARLKKLGDQINSELVALGFDAADFRPFVDSAPVLERPLAEKAGIGWTGKHSLILNHDAGSWFFLGELLINLPLPVDIPVQEGCHSCVACITSCPTGAIVEPYTVDARRCISYLTIELQGAIPEEFRPLMGNRIYGCDDCQLVCPVNRAAPLTQESDFHIRPKLKQPELLTLFTWSETEFLKQTEGSAIRRIGHQRWLRNIAVALGNAPSSADIISALEQRKAQADVDEMVKEHIDWALAQQRAGDLQTNNRKTERLVRVIQKGLPRDA.

The Proton donor role is filled by Asp-154. The region spanning 196–228 is the 4Fe-4S ferredoxin-type domain; that stretch reads LPLPVDIPVQEGCHSCVACITSCPTGAIVEPYT. 8 residues coordinate [4Fe-4S] cluster: Cys-208, Cys-211, Cys-214, Cys-218, Cys-234, Cys-261, Cys-264, and Cys-268.

This sequence belongs to the QueG family. As to quaternary structure, monomer. Cob(II)alamin is required as a cofactor. It depends on [4Fe-4S] cluster as a cofactor.

Its subcellular location is the cytoplasm. The catalysed reaction is epoxyqueuosine(34) in tRNA + AH2 = queuosine(34) in tRNA + A + H2O. It participates in tRNA modification; tRNA-queuosine biosynthesis. Functionally, catalyzes the conversion of epoxyqueuosine (oQ) to queuosine (Q), which is a hypermodified base found in the wobble positions of tRNA(Asp), tRNA(Asn), tRNA(His) and tRNA(Tyr). This chain is Epoxyqueuosine reductase, found in Shewanella oneidensis (strain ATCC 700550 / JCM 31522 / CIP 106686 / LMG 19005 / NCIMB 14063 / MR-1).